We begin with the raw amino-acid sequence, 387 residues long: Chorismate synthase (387 aa).

NADP(+)-binding residues include Arg39 and Arg45. FMN is bound by residues 130–132, 251–252, Gly295, 310–314, and Arg336; these read RSS, NA, and KPIPT.

It belongs to the chorismate synthase family. In terms of assembly, homotetramer. FMNH2 serves as cofactor.

The enzyme catalyses 5-O-(1-carboxyvinyl)-3-phosphoshikimate = chorismate + phosphate. Its pathway is metabolic intermediate biosynthesis; chorismate biosynthesis; chorismate from D-erythrose 4-phosphate and phosphoenolpyruvate: step 7/7. Its function is as follows. Catalyzes the anti-1,4-elimination of the C-3 phosphate and the C-6 proR hydrogen from 5-enolpyruvylshikimate-3-phosphate (EPSP) to yield chorismate, which is the branch point compound that serves as the starting substrate for the three terminal pathways of aromatic amino acid biosynthesis. This reaction introduces a second double bond into the aromatic ring system. The polypeptide is Chorismate synthase (Exiguobacterium sp. (strain ATCC BAA-1283 / AT1b)).